Consider the following 366-residue polypeptide: Reticulon-4-interacting protein 1, mitochondrial (366 aa).

A mitochondrion-targeting transit peptide spans 1–20; sequence MIEKMILRRFFSTKSSTMRA.

This sequence belongs to the zinc-containing alcohol dehydrogenase family. Quinone oxidoreductase subfamily. Expressed in pharynx, muscles and intestine.

The protein resides in the mitochondrion. Functionally, plays a role in oxygen metabolism in the mitochondria by regulating the levels of reactive oxygen species (ROS) thereby conferring resistance to oxidative stress. Involved in resistance to P.aeruginosa PA14 infection. Regulates lifespan. The sequence is that of Reticulon-4-interacting protein 1, mitochondrial from Caenorhabditis elegans.